Consider the following 404-residue polypeptide: Cysteine desulfurase IscS (404 aa).

Residues 75–76 (AT), N155, Q183, and 203–205 (SAH) each bind pyridoxal 5'-phosphate. An N6-(pyridoxal phosphate)lysine modification is found at K206. Pyridoxal 5'-phosphate is bound at residue T243. C328 acts as the Cysteine persulfide intermediate in catalysis. [2Fe-2S] cluster is bound at residue C328.

This sequence belongs to the class-V pyridoxal-phosphate-dependent aminotransferase family. NifS/IscS subfamily. As to quaternary structure, homodimer. Forms a heterotetramer with IscU, interacts with other sulfur acceptors. Requires pyridoxal 5'-phosphate as cofactor.

It localises to the cytoplasm. It carries out the reaction (sulfur carrier)-H + L-cysteine = (sulfur carrier)-SH + L-alanine. Its pathway is cofactor biosynthesis; iron-sulfur cluster biosynthesis. Master enzyme that delivers sulfur to a number of partners involved in Fe-S cluster assembly, tRNA modification or cofactor biosynthesis. Catalyzes the removal of elemental sulfur atoms from cysteine to produce alanine. Functions as a sulfur delivery protein for Fe-S cluster synthesis onto IscU, an Fe-S scaffold assembly protein, as well as other S acceptor proteins. This chain is Cysteine desulfurase IscS, found in Buchnera aphidicola subsp. Baizongia pistaciae (strain Bp).